The sequence spans 96 residues: Transcription and mRNA export factor ENY2 (96 aa).

Belongs to the ENY2 family. As to quaternary structure, component of the nuclear pore complex (NPC)-associated TREX-2 complex (transcription and export complex 2). Component of the SAGA transcription coactivator-HAT complex. Within the SAGA complex, participates in a subcomplex of SAGA called the DUB module (deubiquitination module).

Its subcellular location is the nucleus. It localises to the nucleoplasm. In terms of biological role, involved in mRNA export coupled transcription activation by association with both the TREX-2 and the SAGA complexes. The transcription regulatory histone acetylation (HAT) complex SAGA is a multiprotein complex that activates transcription by remodeling chromatin and mediating histone acetylation and deubiquitination. Within the SAGA complex, participates in a subcomplex that specifically deubiquitinates histones. The SAGA complex is recruited to specific gene promoters by activators, where it is required for transcription. The TREX-2 complex functions in docking export-competent ribonucleoprotein particles (mRNPs) to the nuclear entrance of the nuclear pore complex (nuclear basket). TREX-2 participates in mRNA export and accurate chromatin positioning in the nucleus by tethering genes to the nuclear periphery. The protein is Transcription and mRNA export factor ENY2 of Taeniopygia guttata (Zebra finch).